Reading from the N-terminus, the 182-residue chain is UPF0215 protein Pcal_0119 (182 aa).

Belongs to the UPF0215 family.

The chain is UPF0215 protein Pcal_0119 from Pyrobaculum calidifontis (strain DSM 21063 / JCM 11548 / VA1).